A 122-amino-acid polypeptide reads, in one-letter code: uncharacterized protein (122 aa).

A coiled-coil region spans residues valine 79–arginine 114.

This is an uncharacterized protein from Archaeoglobus fulgidus (strain ATCC 49558 / DSM 4304 / JCM 9628 / NBRC 100126 / VC-16).